A 141-amino-acid polypeptide reads, in one-letter code: Large ribosomal subunit protein uL11 (141 aa).

Belongs to the universal ribosomal protein uL11 family. As to quaternary structure, part of the ribosomal stalk of the 50S ribosomal subunit. Interacts with L10 and the large rRNA to form the base of the stalk. L10 forms an elongated spine to which L12 dimers bind in a sequential fashion forming a multimeric L10(L12)X complex. One or more lysine residues are methylated.

Its function is as follows. Forms part of the ribosomal stalk which helps the ribosome interact with GTP-bound translation factors. This Geobacter sulfurreducens (strain ATCC 51573 / DSM 12127 / PCA) protein is Large ribosomal subunit protein uL11.